We begin with the raw amino-acid sequence, 533 residues long: 1-aminocyclopropane-1-carboxylate synthase 5 (533 aa).

An N6-(pyridoxal phosphate)lysine modification is found at Lys-358.

It belongs to the class-I pyridoxal-phosphate-dependent aminotransferase family. Pyridoxal 5'-phosphate serves as cofactor. In terms of tissue distribution, expressed in shoots and leaf blades. Expressed at low levels in leaf sheaths. Expressed in vasculature of roots and shoots.

The catalysed reaction is S-adenosyl-L-methionine = 1-aminocyclopropane-1-carboxylate + S-methyl-5'-thioadenosine + H(+). It functions in the pathway alkene biosynthesis; ethylene biosynthesis via S-adenosyl-L-methionine; ethylene from S-adenosyl-L-methionine: step 1/2. Its function is as follows. Catalyzes the formation of 1-aminocyclopropane-1-carboxylate, a direct precursor of ethylene in higher plants. This Oryza sativa subsp. japonica (Rice) protein is 1-aminocyclopropane-1-carboxylate synthase 5.